Here is a 124-residue protein sequence, read N- to C-terminus: Prefoldin subunit beta (124 aa).

It belongs to the prefoldin subunit beta family. As to quaternary structure, heterohexamer of two alpha and four beta subunits.

It is found in the cytoplasm. Molecular chaperone capable of stabilizing a range of proteins. Seems to fulfill an ATP-independent, HSP70-like function in archaeal de novo protein folding. The sequence is that of Prefoldin subunit beta from Pyrobaculum arsenaticum (strain DSM 13514 / JCM 11321 / PZ6).